Consider the following 517-residue polypeptide: RNA-binding region-containing protein 3 (517 aa).

The interval Met-1 to Asp-26 is disordered. At Ser-21 the chain carries Phosphoserine. The RRM 1 domain occupies Arg-27–Glu-102. Disordered regions lie at residues Val-106–Glu-130 and Met-213–Arg-254. A Phosphoserine modification is found at Ser-108. The span at Ser-115–Glu-130 shows a compositional bias: basic and acidic residues. Over residues Ala-217–Pro-230 the composition is skewed to pro residues. A compositionally biased stretch (acidic residues) spans Pro-231–Glu-252. Residues Cys-420–Ser-503 form the RRM 2 domain.

As to quaternary structure, component of the U11/U12 snRNPs that are part of the U12-type spliceosome. Found in a complex with m(7)G-capped U12 snRNA. Interacts with PDCD7.

Its subcellular location is the nucleus. In terms of biological role, participates in pre-mRNA U12-dependent splicing, performed by the minor spliceosome which removes U12-type introns. U12-type introns comprises less than 1% of all non-coding sequences. Binds to the 3'-stem-loop of m(7)G-capped U12 snRNA. The protein is RNA-binding region-containing protein 3 (RNPC3) of Pongo abelii (Sumatran orangutan).